Here is a 281-residue protein sequence, read N- to C-terminus: Protein EMBRYO DEFECTIVE 1674 (281 aa).

Composition is skewed to polar residues over residues Met1–Ser14 and Pro24–Ser41. The interval Met1 to Thr47 is disordered. One can recognise an SANTA domain in the interval Val66–Tyr153.

Its function is as follows. Required for normal embryo development. The polypeptide is Protein EMBRYO DEFECTIVE 1674 (Arabidopsis thaliana (Mouse-ear cress)).